A 444-amino-acid polypeptide reads, in one-letter code: Glutamate--tRNA ligase 2 (444 aa).

The 'HIGH' region signature appears at 8–18; sequence PSPTGHLHAGN. The short motif at 241–245 is the 'KMSKS' region element; the sequence is KLSKR. K244 lines the ATP pocket.

It belongs to the class-I aminoacyl-tRNA synthetase family. Glutamate--tRNA ligase type 1 subfamily. Monomer.

The protein localises to the cytoplasm. It catalyses the reaction tRNA(Glu) + L-glutamate + ATP = L-glutamyl-tRNA(Glu) + AMP + diphosphate. Its function is as follows. Catalyzes the attachment of glutamate to tRNA(Glu) in a two-step reaction: glutamate is first activated by ATP to form Glu-AMP and then transferred to the acceptor end of tRNA(Glu). The sequence is that of Glutamate--tRNA ligase 2 from Acidiphilium cryptum (strain JF-5).